A 1010-amino-acid chain; its full sequence is Lethal(2) giant larvae protein homolog SRO77 (1010 aa).

WD repeat units follow at residues 47-80, 87-122, 127-163, 182-215, 240-275, 299-364, 372-407, 431-504, 518-595, 602-637, 649-700, 709-763, 768-815, and 829-852; these read TVTT…VVFT, IKHM…TTVF, ITCI…KLKI, SIQW…KQHF, VIQS…IHAR, AIFK…QKLF, LINF…ETLI, VTTC…FEVN, KNIS…STVI, VSAI…FNEN, VSTV…DATK, GINS…THAL, IATS…KNLR, and SILE…SVLN. A disordered region spans residues 932-958; that stretch reads SNAARKLPPGTEDHRYARPVRSSGRSN.

This sequence belongs to the WD repeat L(2)GL family. Interacts with SEC9.

Functionally, acts as an allosteric regulator of polarized exocytosis by promoting the targeted fusion of vesicles with the plasma membrane. Involved in maintenance of ion homeostasis in cells exposed to NaCl stress. May be involved in the targeting of the myosin proteins to their intrinsic pathways. Multicopy suppressor of RHO3. May also participate in the maintenance of cell polarity and bud growth. This is Lethal(2) giant larvae protein homolog SRO77 (SRO77) from Saccharomyces cerevisiae (strain ATCC 204508 / S288c) (Baker's yeast).